A 191-amino-acid polypeptide reads, in one-letter code: MGQIEWAMWANEQALASGLILITGGIVATAGQFTQWYLGAYSIAAGVLVCLLEYPRGKRSKGSTMERCGQKYLTRVVKLFGPLTRNYYIRAFLHLGLAVPAGFLLATILGTACLAIASGIYLLAAIRGEQWSPIEPKPKERPQIGGTIKQPPSNPPPRPPAEARKKLSEEAAGVPTGGPQENPMPVNDEVV.

Topologically, residues glycine 2–alanine 7 are cytoplasmic. Residues methionine 8 to alanine 30 traverse the membrane as a helical segment. Residues glycine 31–glutamine 35 are Extracellular-facing. A helical transmembrane segment spans residues tryptophan 36 to glutamate 53. The Cytoplasmic portion of the chain corresponds to tyrosine 54–glycine 69. Residues glutamine 70–phenylalanine 80 lie within the membrane without spanning it. Residues glycine 81–asparagine 86 lie on the Cytoplasmic side of the membrane. Residues tyrosine 87–leucine 104 form a helical membrane-spanning segment. Position 105 (leucine 105) is a topological domain, extracellular. Residues alanine 106–isoleucine 126 traverse the membrane as a helical segment. Topologically, residues arginine 127–valine 191 are cytoplasmic. The interval isoleucine 134–valine 191 is disordered. At threonine 147 the chain carries Phosphothreonine. A Glycyl lysine isopeptide (Lys-Gly) (interchain with G-Cter in ubiquitin) cross-link involves residue lysine 149. Serine 168 is subject to Phosphoserine.

Belongs to the p22phox family. In terms of assembly, component of the phagocyte NADPH oxidase core complex/cytochrome b558 complex, composed of CYBB (heavy chain (beta)) and CYBA (light chain (alpha)). Component of the phagocyte NADPH oxidase complex composed of an obligatory core heterodimer formed by the membrane proteins CYBA and CYBB and the cytosolic regulatory subunits NCF1/p47-phox, NCF2/p67-phox, NCF4/p40-phox and the small GTPase RAC1 or RAC2. Interacts with NCF1 (via SH3 domain). Interacts with SH3PXD2A. Interacts with DUOX1, DUOX2 and TPO. Interacts with NOX4; this interaction mediates superoxide generation. Interacts with calprotectin (S100A8/9). Interacts with GBP7. Interacts with NOXO1. Forms a heterodimer with NOX3 and is essential for activity and cell membrane localization of NOX3. Interacts with NOX1. Post-translationally, phosphorylation at Thr-147 enhances NADPH oxidase activity by promoting NCF1/p47-phox binding. Ubiquitinated at Lys-149 likely by RNF145.

The protein localises to the cell membrane. In terms of biological role, subunit of NADPH oxidase complexes that is required for the NADPH oxidase activity that generates, in various cell types, superoxide from molecular oxygen utilizing NADPH as an electron donor. Subunit of the phagocyte NADPH oxidase complex that mediates the transfer of electrons from cytosolic NADPH to O2 to produce the superoxide anion (O2(-)). In the activated complex, electrons are first transferred from NADPH to flavin adenine dinucleotide (FAD) and subsequently transferred via two heme molecules to molecular oxygen, producing superoxide through an outer-sphere reaction. Activation of the NADPH oxidase complex is initiated by the assembly of cytosolic subunits of the NADPH oxidase complex with the core NADPH oxidase complex to form a complex at the plasma membrane or phagosomal membrane. This activation process is initiated by phosphorylation dependent binding of the cytosolic NCF1/p47-phox subunit to the C-terminus of CYBA/p22-phox. Aassociates with NOX3 to form a functional NADPH oxidase constitutively generating superoxide. This is Cytochrome b-245 light chain from Bison bison (American bison).